A 290-amino-acid polypeptide reads, in one-letter code: Nitrogenase iron protein 2 (290 aa).

Residue 10 to 17 coordinates ATP; the sequence is GKGGIGKS. Cys98 is a binding site for [4Fe-4S] cluster. Position 101 is an ADP-ribosylarginine; by dinitrogenase reductase ADP-ribosyltransferase (Arg101). Cys133 is a [4Fe-4S] cluster binding site.

The protein belongs to the NifH/BchL/ChlL family. Homodimer. [4Fe-4S] cluster is required as a cofactor. In terms of processing, the reversible ADP-ribosylation of Arg-101 inactivates the nitrogenase reductase and regulates nitrogenase activity.

The catalysed reaction is N2 + 8 reduced [2Fe-2S]-[ferredoxin] + 16 ATP + 16 H2O = H2 + 8 oxidized [2Fe-2S]-[ferredoxin] + 2 NH4(+) + 16 ADP + 16 phosphate + 6 H(+). In terms of biological role, the key enzymatic reactions in nitrogen fixation are catalyzed by the nitrogenase complex, which has 2 components: the iron protein (component 2) and a component 1 which is either a molybdenum-iron protein, a vanadium-iron, or an iron-iron protein. The polypeptide is Nitrogenase iron protein 2 (vnfH) (Azotobacter chroococcum mcd 1).